The sequence spans 541 residues: Eukaryotic translation initiation factor 3 subunit L (541 aa).

The PCI domain maps to 308–516 (TFSDILLYIQ…IHIADTKVSH (209 aa)).

The protein belongs to the eIF-3 subunit L family. Component of the eukaryotic translation initiation factor 3 (eIF-3) complex. The eIF-3 complex interacts with pix.

It localises to the cytoplasm. Its function is as follows. Component of the eukaryotic translation initiation factor 3 (eIF-3) complex, which is involved in protein synthesis of a specialized repertoire of mRNAs and, together with other initiation factors, stimulates binding of mRNA and methionyl-tRNAi to the 40S ribosome. The eIF-3 complex specifically targets and initiates translation of a subset of mRNAs involved in cell proliferation. In Drosophila pseudoobscura pseudoobscura (Fruit fly), this protein is Eukaryotic translation initiation factor 3 subunit L.